A 162-amino-acid chain; its full sequence is 6,7-dimethyl-8-ribityllumazine synthase (162 aa).

Residues Tyr27, 58-60 (ALE), and 87-89 (CVI) contribute to the 5-amino-6-(D-ribitylamino)uracil site. 92–93 (ET) provides a ligand contact to (2S)-2-hydroxy-3-oxobutyl phosphate. Catalysis depends on His95, which acts as the Proton donor. A 5-amino-6-(D-ribitylamino)uracil-binding site is contributed by Asn120. Arg134 serves as a coordination point for (2S)-2-hydroxy-3-oxobutyl phosphate.

The protein belongs to the DMRL synthase family.

The enzyme catalyses (2S)-2-hydroxy-3-oxobutyl phosphate + 5-amino-6-(D-ribitylamino)uracil = 6,7-dimethyl-8-(1-D-ribityl)lumazine + phosphate + 2 H2O + H(+). The protein operates within cofactor biosynthesis; riboflavin biosynthesis; riboflavin from 2-hydroxy-3-oxobutyl phosphate and 5-amino-6-(D-ribitylamino)uracil: step 1/2. Its function is as follows. Catalyzes the formation of 6,7-dimethyl-8-ribityllumazine by condensation of 5-amino-6-(D-ribitylamino)uracil with 3,4-dihydroxy-2-butanone 4-phosphate. This is the penultimate step in the biosynthesis of riboflavin. The polypeptide is 6,7-dimethyl-8-ribityllumazine synthase (Azorhizobium caulinodans (strain ATCC 43989 / DSM 5975 / JCM 20966 / LMG 6465 / NBRC 14845 / NCIMB 13405 / ORS 571)).